The following is a 168-amino-acid chain: Large ribosomal subunit protein uL10 (168 aa).

This sequence belongs to the universal ribosomal protein uL10 family. In terms of assembly, part of the ribosomal stalk of the 50S ribosomal subunit. The N-terminus interacts with L11 and the large rRNA to form the base of the stalk. The C-terminus forms an elongated spine to which L12 dimers bind in a sequential fashion forming a multimeric L10(L12)X complex.

Functionally, forms part of the ribosomal stalk, playing a central role in the interaction of the ribosome with GTP-bound translation factors. In Laribacter hongkongensis (strain HLHK9), this protein is Large ribosomal subunit protein uL10.